Consider the following 314-residue polypeptide: Homoserine kinase (314 aa).

95-105 (PHSRGLGSSAA) lines the ATP pocket.

Belongs to the GHMP kinase family. Homoserine kinase subfamily.

Its subcellular location is the cytoplasm. It carries out the reaction L-homoserine + ATP = O-phospho-L-homoserine + ADP + H(+). It participates in amino-acid biosynthesis; L-threonine biosynthesis; L-threonine from L-aspartate: step 4/5. Catalyzes the ATP-dependent phosphorylation of L-homoserine to L-homoserine phosphate. This chain is Homoserine kinase, found in Mycobacterium sp. (strain JLS).